A 302-amino-acid chain; its full sequence is MRMNMSDFATFFAVARNQSFRAAGDELGLSSSAISHSIKTLEQRLKIRLFNRTTRSVSLTEAGSNLYERLRPAFDEIQIMLDEMNDFRLTPTGTLKINAARVAARIFLMSLLVGFTREYPDIKVELTTDDSLVDIVQQGFDAGVRLSCIVEKDMISVAIGPPVKLCVAATPEYFARYGKPRHPHDLLNHQCVVFRYPSGKPFHWQFAKELEIAVAGNIILDDVDAELEAVLMGAGIGYLLYEQIKEYLDTGRLECVLEDWSTERPGFQIYYPNRQYMSCGLRAFLDYVKTGQICQSQRHRPQ.

The 60-residue stretch at 1–60 (MRMNMSDFATFFAVARNQSFRAAGDELGLSSSAISHSIKTLEQRLKIRLFNRTTRSVSLT) folds into the HTH lysR-type domain. The segment at residues 20–40 (FRAAGDELGLSSSAISHSIKT) is a DNA-binding region (H-T-H motif).

It belongs to the LysR transcriptional regulatory family.

This is an uncharacterized protein from Escherichia coli (strain K12).